Consider the following 215-residue polypeptide: Peroxiredoxin 1 (215 aa).

Residues 2–158 (VKLYSKFPDV…LLRITKAAIV (157 aa)) enclose the Thioredoxin domain. C46 functions as the Cysteine sulfenic acid (-SOH) intermediate in the catalytic mechanism. R121 contributes to the substrate binding site.

It belongs to the peroxiredoxin family. Prx6 subfamily. As to quaternary structure, homodecamer. Pentamer of dimers that assemble into a ring structure.

It localises to the cytoplasm. It carries out the reaction a hydroperoxide + [thioredoxin]-dithiol = an alcohol + [thioredoxin]-disulfide + H2O. Its function is as follows. Thiol-specific peroxidase that catalyzes the reduction of hydrogen peroxide and organic hydroperoxides to water and alcohols, respectively. Plays a role in cell protection against oxidative stress by detoxifying peroxides. In Sulfurisphaera tokodaii (strain DSM 16993 / JCM 10545 / NBRC 100140 / 7) (Sulfolobus tokodaii), this protein is Peroxiredoxin 1.